Here is a 230-residue protein sequence, read N- to C-terminus: Ribose-5-phosphate isomerase A (230 aa).

Residues 29–32 (TGST), 85–88 (DGAD), and 99–102 (KGAG) each bind substrate. Glu108 functions as the Proton acceptor in the catalytic mechanism. Residue Lys126 participates in substrate binding.

Belongs to the ribose 5-phosphate isomerase family. As to quaternary structure, homodimer.

The enzyme catalyses aldehydo-D-ribose 5-phosphate = D-ribulose 5-phosphate. It functions in the pathway carbohydrate degradation; pentose phosphate pathway; D-ribose 5-phosphate from D-ribulose 5-phosphate (non-oxidative stage): step 1/1. In terms of biological role, catalyzes the reversible conversion of ribose-5-phosphate to ribulose 5-phosphate. The protein is Ribose-5-phosphate isomerase A of Synechococcus sp. (strain JA-3-3Ab) (Cyanobacteria bacterium Yellowstone A-Prime).